The following is a 165-amino-acid chain: Small histone ubiquitination factor 1 (165 aa).

The span at M1–Y17 shows a compositional bias: basic and acidic residues. Positions M1 to S86 are disordered. Low complexity-rich tracts occupy residues S29 to R38 and S50 to N60. Residues P73 to S86 show a composition bias toward polar residues.

Component of the histone H2B ubiquitin ligase complex (HULC) composed of at least brl1, brl2, rhp6 and shf1.

Its subcellular location is the nucleus. It is found in the cytoplasm. The protein resides in the cytoskeleton. It localises to the microtubule organizing center. The protein localises to the spindle pole body. Component of the histone H2B ubiquitin ligase complex (HULC) which plays a role in transcription regulation by catalyzing the monoubiquitination of histone H2B to form H2BK123ub1. H2BK123ub1 gives a specific tag for epigenetic transcriptional activation and is also a prerequisite for H3K4me and H3K79me formation. This Schizosaccharomyces pombe (strain 972 / ATCC 24843) (Fission yeast) protein is Small histone ubiquitination factor 1 (shf1).